The following is a 427-amino-acid chain: Adenylosuccinate synthetase (427 aa).

Residues 12 to 18 (GDEGKGK) and 40 to 42 (GHT) contribute to the GTP site. Asp-13 functions as the Proton acceptor in the catalytic mechanism. 2 residues coordinate Mg(2+): Asp-13 and Gly-40. IMP is bound by residues 13–16 (DEGK), 38–41 (NAGH), Thr-128, Arg-142, Gln-223, Thr-238, and Arg-302. His-41 (proton donor) is an active-site residue. Substrate is bound at residue 298–304 (TTTGRAR). GTP contacts are provided by residues Arg-304, 330 to 332 (KLD), and 412 to 414 (AVG).

The protein belongs to the adenylosuccinate synthetase family. Homodimer. Requires Mg(2+) as cofactor.

It localises to the cytoplasm. The enzyme catalyses IMP + L-aspartate + GTP = N(6)-(1,2-dicarboxyethyl)-AMP + GDP + phosphate + 2 H(+). Its pathway is purine metabolism; AMP biosynthesis via de novo pathway; AMP from IMP: step 1/2. Its function is as follows. Plays an important role in the de novo pathway of purine nucleotide biosynthesis. Catalyzes the first committed step in the biosynthesis of AMP from IMP. This Desulfitobacterium hafniense (strain Y51) protein is Adenylosuccinate synthetase.